The primary structure comprises 289 residues: Energy-coupling factor transporter ATP-binding protein EcfA2 (289 aa).

One can recognise an ABC transporter domain in the interval 3-246 (IRFKQVDFTY…TQWLKEKQLG (244 aa)). 40–47 (GHTGSGKS) lines the ATP pocket.

The protein belongs to the ABC transporter superfamily. Energy-coupling factor EcfA family. As to quaternary structure, forms a stable energy-coupling factor (ECF) transporter complex composed of 2 membrane-embedded substrate-binding proteins (S component), 2 ATP-binding proteins (A component) and 2 transmembrane proteins (T component).

Its subcellular location is the cell membrane. ATP-binding (A) component of a common energy-coupling factor (ECF) ABC-transporter complex. Unlike classic ABC transporters this ECF transporter provides the energy necessary to transport a number of different substrates. This chain is Energy-coupling factor transporter ATP-binding protein EcfA2, found in Enterococcus faecalis (strain ATCC 700802 / V583).